A 727-amino-acid polypeptide reads, in one-letter code: MPSPSYNRHIIIASCFCCLLIFSSAARVPKASKKHLARVKQLLNDEAERHNTLIQSDSVTVFDDIQRNPNTGVHHDELAVNNADEYFQGDVDLSEQQVKIIEDQFTQGKREKRKIGRNPLYKKWDTRGPISFDYAESIPFQTRQKIRSAMLLWQQHTCLRFEEGGPNVDRLEFFDGGGCSSFVGRVGGTQGISISTPGCDVVGIISHEIGHALGIFHEQARPDQERHIAINYNNIPLSRWNNFQAVGENHAETYNLPYDTGSVMHYGPYGFASDPYTPTIRTLERVQQSTIGQRAGPSFLDYQAINMAYGCTESCADLPCLRNGYTHPNNCSMCACPEGLSGRYCEQVYPSNAQCGGVIFATKEVKYITSPNYPDKFPIDTECNWIIAAPIEGRVFMEFEGDFDFLCEDTCDKAYVEVKYHSDKRLTGARYCCSLLPKNRFISFKNEMIIIMRGYRSSGAGFKAKFWSNLGEPEGVSTPLPPTTAPLPEISETTQKPEPTTVQSTTTYTTAIPRRTAKKQFFTRKPITIPLTPLTSSSTTTESTTVSSTTQSTTWLPTEPSFATGETEITTASPTITLFPSLSTILPPINSLAGVLPSTQAPDIINSVLECGCGAWSEWQGECSQQCGGCGHRLRKRECKKEACRKEEKRPCNFSACPDGTNFLINNAEFHILWRGCCVGLFRSGDQCSALETESNPFFKIINSLLNIQDAKNNDTLIAKRMMRGEH.

The signal sequence occupies residues 1–25; the sequence is MPSPSYNRHIIIASCFCCLLIFSSA. Positions 26–114 are excised as a propeptide; the sequence is ARVPKASKKH…FTQGKREKRK (89 aa). A Peptidase M12A domain is found at 113–312; that stretch reads RKIGRNPLYK…QAINMAYGCT (200 aa). Cystine bridges form between Cys158-Cys311 and Cys179-Cys199. Residue His207 participates in Zn(2+) binding. Glu208 is an active-site residue. Residues His211 and His217 each contribute to the Zn(2+) site. The EGF-like domain occupies 306-345; it reads NMAYGCTESCADLPCLRNGYTHPNNCSMCACPEGLSGRYC. N-linked (GlcNAc...) asparagine glycosylation is present at Asn330. Residues 353 to 469 enclose the CUB domain; that stretch reads AQCGGVIFAT…AGFKAKFWSN (117 aa). Intrachain disulfides connect Cys355–Cys383 and Cys411–Cys432. Disordered stretches follow at residues 473-506 and 532-561; these read PEGV…QSTT and TPLT…TEPS. Residues 535–554 are compositionally biased toward low complexity; that stretch reads TSSSTTTESTTVSSTTQSTT. Residues 610–658 enclose the TSP type-1 domain; it reads ECGCGAWSEWQGECSQQCGGCGHRLRKRECKKEACRKEEKRPCNFSACP. Disulfide bonds link Cys611-Cys644, Cys623-Cys652, Cys627-Cys657, and Cys639-Cys644. Residues Asn653 and Asn714 are each glycosylated (N-linked (GlcNAc...) asparagine).

Zn(2+) is required as a cofactor. As to expression, expressed in the epidermis, the excretory canal cell, duct cell, pore cell, and excretory gland cell. Expressed in an oscillating pattern in epithelial cells with increased expression during the lethargus phase which occurs during molting between larval and adult stages. Not expressed in seam cells or in the RIS neuron.

The protein localises to the secreted. Its function is as follows. Metalloprotease. As part of the innate immune response to molting and injury to the adult epidermis, positively regulates the activity of the transcription factor sta-2 to promote the expression of epidermal antimicrobial peptides such as nlp-29. Through regulating the expression of epidermal antimicrobial peptides such as nlp-29, modulates sleep duration and locomotion quiescence during the sleep-like state called lethargus which occurs during molting between larval and adult stages. This may occur through the sleep-active RIS neuron. The protein is Zinc metalloproteinase nas-38 of Caenorhabditis elegans.